A 155-amino-acid chain; its full sequence is Ribosome maturation factor RimP (155 aa).

Belongs to the RimP family.

The protein localises to the cytoplasm. Functionally, required for maturation of 30S ribosomal subunits. In Staphylococcus saprophyticus subsp. saprophyticus (strain ATCC 15305 / DSM 20229 / NCIMB 8711 / NCTC 7292 / S-41), this protein is Ribosome maturation factor RimP.